The sequence spans 388 residues: Transposase for insertion sequence element IS406 (388 aa).

The protein belongs to the transposase mutator family.

In terms of biological role, required for the transposition of the insertion element. This chain is Transposase for insertion sequence element IS406, found in Burkholderia multivorans (strain ATCC 17616 / 249).